Reading from the N-terminus, the 381-residue chain is Odorant receptor 46a, isoform A (381 aa).

Topologically, residues 1–37 (MSKGVEIFYKGQKAFLNILSLWPQIERRWRIIHQVNY) are cytoplasmic. A helical transmembrane segment spans residues 38–58 (VHVIVFWVLLFDLLLVLHVMA). The N-linked (GlcNAc...) asparagine glycan is linked to N59. Topologically, residues 59–65 (NLSYMSE) are extracellular. A helical membrane pass occupies residues 66–86 (VVKAIFILATSAGHTTKLLSI). Topologically, residues 87–127 (KANNVQMEELFRRLDNEEFRPRGANEELIFAAACERSRKLR) are cytoplasmic. Residues 128-148 (DFYGALSFAALSMILIPQFAL) form a helical membrane-spanning segment. Residues 149-170 (DWSHLPLKTYNPLGENTGSPAY) are Extracellular-facing. A helical transmembrane segment spans residues 171-191 (WLLYCYQCLALSVSCITNIGF). The Cytoplasmic portion of the chain corresponds to 192–255 (DSLCSSLFIF…KTVERLLCKP (64 aa)). Residues 256 to 276 (ISVQIFCSVLVLTANFYAIAV) form a helical membrane-spanning segment. Residues 277 to 287 (LSDERLELFKY) lie on the Extracellular side of the membrane. The helical transmembrane segment at 288–308 (VTYQACMLIQIFILCYYAGEV) threads the bilayer. Topologically, residues 309–355 (TQRSLDLPHELYKTSWVDWDYRSRRIALLFMQRLHSTLRIRTLNPSL) are cytoplasmic. A helical membrane pass occupies residues 356–376 (GFDLMLFSSIVNCSYSYFALL). At 377 to 381 (KRVNS) the chain is on the extracellular side.

Belongs to the insect chemoreceptor superfamily. Heteromeric odorant receptor channel (TC 1.A.69) family. Or2a subfamily. As to quaternary structure, interacts with Orco. Complexes exist early in the endomembrane system in olfactory sensory neurons (OSNs), coupling these complexes to the conserved ciliary trafficking pathway. In terms of tissue distribution, isoform A is expressed in a subset of 17 olfactory receptor neurons in the maxillary palp.

The protein resides in the cell membrane. In terms of biological role, odorant receptor which mediates acceptance or avoidance behavior, depending on its substrates. The odorant receptor repertoire encodes a large collection of odor stimuli that vary widely in identity, intensity, and duration. May form a complex with Orco to form odorant-sensing units, providing sensitive and prolonged odorant signaling and calcium permeability. This Drosophila melanogaster (Fruit fly) protein is Odorant receptor 46a, isoform A (Or46a).